Here is a 1202-residue protein sequence, read N- to C-terminus: Caskin-2 (1202 aa).

ANK repeat units lie at residues 48 to 77 (DGFS…TVDI), 81 to 110 (NGMR…AVNA), 114 to 143 (DGQI…NPCL), 147 to 176 (AKKT…CVAL), 188 to 217 (NYTT…EINR), and 220 to 249 (KTGT…DVNI). Tyr253 carries the phosphotyrosine modification. Residues 281 to 347 (SGILKVRALK…PPGIVEVVSK (67 aa)) enclose the SH3 domain. Residues 355–460 (RLPSAPTPLR…GLHPPSLADN (106 aa)) are disordered. Phosphoserine is present on residues Ser358, Ser393, Ser396, Ser403, Ser406, and Ser409. Residues 415–425 (SAGSGQSSEGT) show a composition bias toward polar residues. Position 471 is a phosphoserine (Ser471). SAM domains lie at 489-552 (KDAQ…LSIA) and 558-622 (YIPT…LAEL). 2 disordered regions span residues 676–1104 (LQAA…APKP) and 1116–1181 (GPKL…STKH). Ser725 bears the Phosphoserine mark. Residues 731 to 740 (NLPEGTERPP) show a composition bias toward basic and acidic residues. Residues 765–774 (SPAPGPPPGA) are compositionally biased toward pro residues. Phosphoserine occurs at positions 858, 877, 878, and 892. A compositionally biased stretch (pro residues) spans 913–923 (PSEPPGPPAPA). Positions 940-949 (PPSRGSSGEG) are enriched in low complexity. Composition is skewed to pro residues over residues 966-978 (PAGP…PVPP) and 1018-1030 (PAAP…PGES). The span at 1031-1051 (PPASSLPQPEPSSLPAQGVPT) shows a compositional bias: low complexity. Composition is skewed to pro residues over residues 1052 to 1068 (PLAP…PCPG) and 1124 to 1133 (GPRPVPPPRP). The span at 1135–1151 (STGTVGPGQAQQRLEQT) shows a compositional bias: polar residues. Over residues 1161 to 1172 (AAEKSIGTKEQE) the composition is skewed to basic and acidic residues.

In terms of assembly, may not bind CASK.

The protein localises to the cytoplasm. The chain is Caskin-2 (CASKIN2) from Homo sapiens (Human).